The chain runs to 394 residues: Putative 8-amino-7-oxononanoate synthase (394 aa).

Arg-30 contacts substrate. 117 to 118 (GY) provides a ligand contact to pyridoxal 5'-phosphate. Residue His-142 coordinates substrate. Pyridoxal 5'-phosphate is bound by residues Ser-190, 215 to 218 (DEAH), and 246 to 249 (TLSK). Lys-249 carries the post-translational modification N6-(pyridoxal phosphate)lysine. A substrate-binding site is contributed by Thr-364.

The protein belongs to the class-II pyridoxal-phosphate-dependent aminotransferase family. BioF subfamily. Homodimer. Pyridoxal 5'-phosphate is required as a cofactor.

The enzyme catalyses 6-carboxyhexanoyl-[ACP] + L-alanine + H(+) = (8S)-8-amino-7-oxononanoate + holo-[ACP] + CO2. It participates in cofactor biosynthesis; biotin biosynthesis. Functionally, catalyzes the decarboxylative condensation of pimeloyl-[acyl-carrier protein] and L-alanine to produce 8-amino-7-oxononanoate (AON), [acyl-carrier protein], and carbon dioxide. In Nostoc punctiforme (strain ATCC 29133 / PCC 73102), this protein is Putative 8-amino-7-oxononanoate synthase (bioF).